The chain runs to 534 residues: Glucans biosynthesis protein D (534 aa).

Positions 1–30 form a signal peptide, tat-type signal; it reads MRMQRRHLLKNAAAALAALGLPALPQWALA.

Belongs to the OpgD/OpgG family. In terms of processing, predicted to be exported by the Tat system. The position of the signal peptide cleavage has not been experimentally proven.

Its subcellular location is the periplasm. The protein operates within glycan metabolism; osmoregulated periplasmic glucan (OPG) biosynthesis. Its function is as follows. Probably involved in the control of the structural glucose backbone of osmoregulated periplasmic glucans (OPGs). The protein is Glucans biosynthesis protein D of Xanthomonas oryzae pv. oryzae (strain KACC10331 / KXO85).